A 910-amino-acid polypeptide reads, in one-letter code: Valine--tRNA ligase (910 aa).

A 'HIGH' region motif is present at residues 45–55 (PNVTGSLHMGH). Residues 554–558 (KMSKS) carry the 'KMSKS' region motif. An ATP-binding site is contributed by K557. Residues 842-910 (DLQAEAARLA…TAESRIRDAS (69 aa)) are a coiled coil.

This sequence belongs to the class-I aminoacyl-tRNA synthetase family. ValS type 1 subfamily. As to quaternary structure, monomer.

The protein localises to the cytoplasm. It carries out the reaction tRNA(Val) + L-valine + ATP = L-valyl-tRNA(Val) + AMP + diphosphate. Catalyzes the attachment of valine to tRNA(Val). As ValRS can inadvertently accommodate and process structurally similar amino acids such as threonine, to avoid such errors, it has a 'posttransfer' editing activity that hydrolyzes mischarged Thr-tRNA(Val) in a tRNA-dependent manner. In Brucella suis biovar 1 (strain 1330), this protein is Valine--tRNA ligase.